Reading from the N-terminus, the 662-residue chain is Retaining alpha-galactosidase (662 aa).

A signal peptide spans 1 to 19 (MKKLTFLLLCVLCTLSLQA). Residue Glu174 participates in Ca(2+) binding. Residue Asp415 is the Nucleophile of the active site. The Ca(2+) site is built by Glu464 and Glu470. The active-site Proton donor/acceptor is Glu470.

The protein belongs to the glycosyl hydrolase 97 family. As to quaternary structure, monomer. Ca(2+) is required as a cofactor.

The enzyme catalyses Hydrolysis of terminal, non-reducing alpha-D-galactose residues in alpha-D-galactosides, including galactose oligosaccharides, galactomannans and galactolipids.. Inhibited by EDTA in vitro. In terms of biological role, galactosidase that is able to hydrolyze the alpha-1,6 disaccharide melibiose and the synthetic p-nitrophenyl alpha-galactoside substrate (pNP-Gal), with retention of the anomeric configuration. Does not hydrolyze DNP-Glc or pNP-Glc. This is Retaining alpha-galactosidase from Bacteroides thetaiotaomicron (strain ATCC 29148 / DSM 2079 / JCM 5827 / CCUG 10774 / NCTC 10582 / VPI-5482 / E50).